The sequence spans 217 residues: ATP-dependent Clp protease proteolytic subunit (217 aa).

Catalysis depends on serine 120, which acts as the Nucleophile. Histidine 145 is a catalytic residue.

Belongs to the peptidase S14 family. As to quaternary structure, fourteen ClpP subunits assemble into 2 heptameric rings which stack back to back to give a disk-like structure with a central cavity, resembling the structure of eukaryotic proteasomes.

The protein resides in the cytoplasm. It catalyses the reaction Hydrolysis of proteins to small peptides in the presence of ATP and magnesium. alpha-casein is the usual test substrate. In the absence of ATP, only oligopeptides shorter than five residues are hydrolyzed (such as succinyl-Leu-Tyr-|-NHMec, and Leu-Tyr-Leu-|-Tyr-Trp, in which cleavage of the -Tyr-|-Leu- and -Tyr-|-Trp bonds also occurs).. Functionally, cleaves peptides in various proteins in a process that requires ATP hydrolysis. Has a chymotrypsin-like activity. Plays a major role in the degradation of misfolded proteins. The protein is ATP-dependent Clp protease proteolytic subunit of Ralstonia nicotianae (strain ATCC BAA-1114 / GMI1000) (Ralstonia solanacearum).